Consider the following 122-residue polypeptide: Large ribosomal subunit protein uL14c (122 aa).

Belongs to the universal ribosomal protein uL14 family. As to quaternary structure, part of the 50S ribosomal subunit.

It localises to the plastid. It is found in the chloroplast. Its function is as follows. Binds to 23S rRNA. This Chloranthus spicatus (Chulantree) protein is Large ribosomal subunit protein uL14c.